The chain runs to 118 residues: MAVVGVGVDVVDVDRFAATLSRTPGIAMRLFTPAERGLARPERLAARFAAKEAVAKVLGAPPGLEWHDAEVVLATGGRPSLRIRGTVAAAAQRLDIASWHLSLTHDGGVAIAMVVAES.

2 residues coordinate Mg(2+): Asp-9 and Glu-52.

It belongs to the P-Pant transferase superfamily. AcpS family. The cofactor is Mg(2+).

It localises to the cytoplasm. The catalysed reaction is apo-[ACP] + CoA = holo-[ACP] + adenosine 3',5'-bisphosphate + H(+). Transfers the 4'-phosphopantetheine moiety from coenzyme A to a Ser of acyl-carrier-protein. This Frankia alni (strain DSM 45986 / CECT 9034 / ACN14a) protein is Holo-[acyl-carrier-protein] synthase.